The primary structure comprises 699 residues: Polyribonucleotide nucleotidyltransferase (699 aa).

Mg(2+) contacts are provided by Asp485 and Asp491. One can recognise a KH domain in the interval Pro552–Ile611. Residues Gly621 to Lys689 form the S1 motif domain.

This sequence belongs to the polyribonucleotide nucleotidyltransferase family. In terms of assembly, component of the RNA degradosome, which is a multiprotein complex involved in RNA processing and mRNA degradation. Mg(2+) serves as cofactor.

The protein localises to the cytoplasm. It carries out the reaction RNA(n+1) + phosphate = RNA(n) + a ribonucleoside 5'-diphosphate. Its function is as follows. Involved in mRNA degradation. Catalyzes the phosphorolysis of single-stranded polyribonucleotides processively in the 3'- to 5'-direction. This Shewanella sp. (strain MR-7) protein is Polyribonucleotide nucleotidyltransferase.